A 909-amino-acid chain; its full sequence is DNA mismatch repair protein MutS (909 aa).

The span at glutamine 275–glutamine 290 shows a compositional bias: basic and acidic residues. The interval glutamine 275–phenylalanine 295 is disordered. Glycine 661 to serine 668 contributes to the ATP binding site.

This sequence belongs to the DNA mismatch repair MutS family.

Functionally, this protein is involved in the repair of mismatches in DNA. It is possible that it carries out the mismatch recognition step. This protein has a weak ATPase activity. The chain is DNA mismatch repair protein MutS from Mesorhizobium japonicum (strain LMG 29417 / CECT 9101 / MAFF 303099) (Mesorhizobium loti (strain MAFF 303099)).